Here is a 203-residue protein sequence, read N- to C-terminus: Large ribosomal subunit protein uL13 (203 aa).

N-acetylalanine is present on A2. R59 carries the citrulline modification. S77 bears the Phosphoserine; by ZIPK/DAPK3 mark. R140 carries the post-translational modification Citrulline. Position 191 is an N6-acetyllysine (K191).

This sequence belongs to the universal ribosomal protein uL13 family. As to quaternary structure, component of the 60S ribosome. Component of the GAIT complex. Interacts with EIF4G1. Phosphorylation at Ser-77 upon interferon-gamma treatment in monocytes involves a DAPK1-DAPK3 kinase cascade and is causing release from the ribosome, association with the GAIT complex and subsequent involvement in transcript-selective translation inhibition. Post-translationally, citrullinated by PADI4.

Its subcellular location is the cytoplasm. Associated with ribosomes but is not required for canonical ribosome function and has extra-ribosomal functions. Component of the GAIT (gamma interferon-activated inhibitor of translation) complex which mediates interferon-gamma-induced transcript-selective translation inhibition in inflammation processes. Upon interferon-gamma activation and subsequent phosphorylation dissociates from the ribosome and assembles into the GAIT complex which binds to stem loop-containing GAIT elements in the 3'-UTR of diverse inflammatory mRNAs (such as ceruplasmin) and suppresses their translation. In the GAIT complex interacts with m7G cap-bound eIF4G at or near the eIF3-binding site and blocks the recruitment of the 43S ribosomal complex. Involved in methylation of rRNA. This Homo sapiens (Human) protein is Large ribosomal subunit protein uL13 (RPL13A).